We begin with the raw amino-acid sequence, 838 residues long: MPLSYQHFRKLLLLDDGTEAGPLEEELPRLADADLNRRVAEDLNLGNLNVSIPWTHKVGNFTGLYSSTVPIFNPEWQTPSFPKIHLQEDIINRCQQFVGPLTVNEKRRLKLIMPARFYPTHTKYLPLDKGIKPYYPDQVVNHYFQTRHYLHTLWKAGILYKRETTRSASFCGSPYSWEQELQHSQRHGDESFCSQPSGIPSRSSVGPCIRSQLNKSRLGLQPHQGPLASSQPGRSGSIRARAHPSTRRYFGVEPSGSGHIDHSVNNSSSCLHQSAVRKAAYSHLSTSKRQSSSGHAVEFHCLAPSSAGSQSQGSVSSCWWLQFRNSKPCSEYCLSHLVNLREDWGPCDDHGEHHIRIPRTPARVTGGVFLVDKNPHNTAESRLVVDFSQFSRGITRVSWPKFAVPNLQSLTNLLSSNLSWLSLDVSAAFYHIPLHPAAMPHLLIGSSGLSRYVARLSSNSRINNNQYGTMQNLHDSCSRQLFVSLMLLYKTYGWKLHLYSHPIVLGFRKIPMGVGLSPFLLAQFTSAICSVVRRAFPHCLAFSYMDDVVLGAKSVQHRESLYTAVTNFLLSLGIHLNPNKTKRWGYSLNFMGYIIGSWGTLPQDHIVQKIKHCFRKLPVNRPIDWKVCQRIVGLLGFAAPFTQCGYPALMPLYACIQAKQAFTFSPTYKAFLSKQYMNLYPVARQRPGLCQVFADATPTGWGLAIGHQRMRGTFVAPLPIHTAELLAACFARSRSGAKLIGTDNSVVLSRKYTSFPWLLGCTANWILRGTSFVYVPSALNPADDPSRGRLGLSRPLLRLPFQPTTGRTSLYAVSPSVPSHLPVRVHFASPLHVAWRPP.

Positions 1–179 (MPLSYQHFRK…FCGSPYSWEQ (179 aa)) are terminal protein domain (TP). The spacer stretch occupies residues 180–341 (ELQHSQRHGD…YCLSHLVNLR (162 aa)). The disordered stretch occupies residues 219–245 (GLQPHQGPLASSQPGRSGSIRARAHPS). The segment at 342-685 (EDWGPCDDHG…YMNLYPVARQ (344 aa)) is polymerase/reverse transcriptase domain (RT). Residues 352–595 (EHHIRIPRTP…YSLNFMGYII (244 aa)) form the Reverse transcriptase domain. Mg(2+) is bound by residues aspartate 424, aspartate 546, and aspartate 547.

Belongs to the hepadnaviridae P protein family.

It catalyses the reaction DNA(n) + a 2'-deoxyribonucleoside 5'-triphosphate = DNA(n+1) + diphosphate. The enzyme catalyses Endonucleolytic cleavage to 5'-phosphomonoester.. Its activity is regulated as follows. Activated by host HSP70 and HSP40 in vitro to be able to bind the epsilon loop of the pgRNA. Because deletion of the RNase H region renders the protein partly chaperone-independent, the chaperones may be needed indirectly to relieve occlusion of the RNA-binding site by this domain. Inhibited by several reverse-transcriptase inhibitors: Lamivudine, Adefovir and Entecavir. Its function is as follows. Multifunctional enzyme that converts the viral RNA genome into dsDNA in viral cytoplasmic capsids. This enzyme displays a DNA polymerase activity that can copy either DNA or RNA templates, and a ribonuclease H (RNase H) activity that cleaves the RNA strand of RNA-DNA heteroduplexes in a partially processive 3'- to 5'-endonucleasic mode. Neo-synthesized pregenomic RNA (pgRNA) are encapsidated together with the P protein, and reverse-transcribed inside the nucleocapsid. Initiation of reverse-transcription occurs first by binding the epsilon loop on the pgRNA genome, and is initiated by protein priming, thereby the 5'-end of (-)DNA is covalently linked to P protein. Partial (+)DNA is synthesized from the (-)DNA template and generates the relaxed circular DNA (RC-DNA) genome. After budding and infection, the RC-DNA migrates in the nucleus, and is converted into a plasmid-like covalently closed circular DNA (cccDNA). The activity of P protein does not seem to be necessary for cccDNA generation, and is presumably released from (+)DNA by host nuclear DNA repair machinery. This chain is Protein P, found in Hepatitis B virus genotype A2 subtype adw (isolate Japan/Nishioka/1983) (HBV-A).